The chain runs to 323 residues: L-lactate dehydrogenase 1 (323 aa).

Residues valine 18, aspartate 39, tyrosine 69, and glycine 83–alanine 84 each bind NAD(+). 2 residues coordinate substrate: glutamine 86 and arginine 92. Residues serine 105, valine 122–asparagine 124, and serine 147 each bind NAD(+). Asparagine 124–aspartate 127 is a binding site for substrate. Aspartate 152–arginine 155 contributes to the substrate binding site. Histidine 179 (proton acceptor) is an active-site residue. Tyrosine 223 carries the post-translational modification Phosphotyrosine. Position 232 (threonine 232) interacts with substrate.

The protein belongs to the LDH/MDH superfamily. LDH family. Homotetramer.

The protein resides in the cytoplasm. It carries out the reaction (S)-lactate + NAD(+) = pyruvate + NADH + H(+). Its pathway is fermentation; pyruvate fermentation to lactate; (S)-lactate from pyruvate: step 1/1. Catalyzes the conversion of lactate to pyruvate. The protein is L-lactate dehydrogenase 1 of Lactobacillus acidophilus (strain ATCC 700396 / NCK56 / N2 / NCFM).